A 55-amino-acid chain; its full sequence is MSAYTVSRLALDAGVSVHIVRDYLLRGLLRPVACTPGGYGLFDDAALQRLCFVRA.

An HTH merR-type domain is found at A3–A55. A DNA-binding region (H-T-H motif) is located at residues V6–L25.

The sequence is that of HTH-type transcriptional regulator MerD (merD) from Pseudomonas fluorescens.